The chain runs to 262 residues: Aminoglycoside (3'') (9) adenylyltransferase (262 aa).

The enzyme catalyses streptomycin + ATP = 3''-O-adenylylstreptomycin + diphosphate. It carries out the reaction spectinomycin + ATP = 9-O-adenylylspectinomycin + diphosphate. Functionally, mediates bacterial resistance to the antibiotics streptomycin and spectinomycin. This is Aminoglycoside (3'') (9) adenylyltransferase from Shigella flexneri.